Here is a 132-residue protein sequence, read N- to C-terminus: Small ribosomal subunit protein uS12 (132 aa).

D89 is subject to 3-methylthioaspartic acid. The interval 101–132 (TLDASGAAGPSSTNKATRNRKRSKYGVKRPKA) is disordered. Residues 117 to 132 (TRNRKRSKYGVKRPKA) are compositionally biased toward basic residues.

The protein belongs to the universal ribosomal protein uS12 family. As to quaternary structure, part of the 30S ribosomal subunit. Contacts proteins S8 and S17. May interact with IF1 in the 30S initiation complex.

In terms of biological role, with S4 and S5 plays an important role in translational accuracy. Functionally, interacts with and stabilizes bases of the 16S rRNA that are involved in tRNA selection in the A site and with the mRNA backbone. Located at the interface of the 30S and 50S subunits, it traverses the body of the 30S subunit contacting proteins on the other side and probably holding the rRNA structure together. The combined cluster of proteins S8, S12 and S17 appears to hold together the shoulder and platform of the 30S subunit. This Sorangium cellulosum (strain So ce56) (Polyangium cellulosum (strain So ce56)) protein is Small ribosomal subunit protein uS12.